A 386-amino-acid polypeptide reads, in one-letter code: Succinate--CoA ligase [ADP-forming] subunit beta (386 aa).

One can recognise an ATP-grasp domain in the interval Lys9–Glu244. ATP is bound by residues Lys46, Gly53 to Gly55, Glu99, Ala102, and Glu107. Residues Asn199 and Asp213 each contribute to the Mg(2+) site. Substrate contacts are provided by residues Asn264 and Gly321–Met323.

Belongs to the succinate/malate CoA ligase beta subunit family. In terms of assembly, heterotetramer of two alpha and two beta subunits. Mg(2+) serves as cofactor.

The catalysed reaction is succinate + ATP + CoA = succinyl-CoA + ADP + phosphate. It carries out the reaction GTP + succinate + CoA = succinyl-CoA + GDP + phosphate. It functions in the pathway carbohydrate metabolism; tricarboxylic acid cycle; succinate from succinyl-CoA (ligase route): step 1/1. In terms of biological role, succinyl-CoA synthetase functions in the citric acid cycle (TCA), coupling the hydrolysis of succinyl-CoA to the synthesis of either ATP or GTP and thus represents the only step of substrate-level phosphorylation in the TCA. The beta subunit provides nucleotide specificity of the enzyme and binds the substrate succinate, while the binding sites for coenzyme A and phosphate are found in the alpha subunit. This Polaromonas sp. (strain JS666 / ATCC BAA-500) protein is Succinate--CoA ligase [ADP-forming] subunit beta.